Reading from the N-terminus, the 260-residue chain is Proteasome subunit alpha (260 aa).

The protein belongs to the peptidase T1A family. In terms of assembly, the 20S proteasome core is composed of 14 alpha and 14 beta subunits that assemble into four stacked heptameric rings, resulting in a barrel-shaped structure. The two inner rings, each composed of seven catalytic beta subunits, are sandwiched by two outer rings, each composed of seven alpha subunits. The catalytic chamber with the active sites is on the inside of the barrel. Has a gated structure, the ends of the cylinder being occluded by the N-termini of the alpha-subunits. Is capped at one or both ends by the proteasome regulatory ATPase, PAN.

The protein localises to the cytoplasm. With respect to regulation, the formation of the proteasomal ATPase PAN-20S proteasome complex, via the docking of the C-termini of PAN into the intersubunit pockets in the alpha-rings, triggers opening of the gate for substrate entry. Interconversion between the open-gate and close-gate conformations leads to a dynamic regulation of the 20S proteasome proteolysis activity. Functionally, component of the proteasome core, a large protease complex with broad specificity involved in protein degradation. This chain is Proteasome subunit alpha, found in Thermococcus kodakarensis (strain ATCC BAA-918 / JCM 12380 / KOD1) (Pyrococcus kodakaraensis (strain KOD1)).